The following is a 125-amino-acid chain: Small ribosomal subunit protein uS11 (125 aa).

The tract at residues 101-125 (KDVKDVTPTPHNGTRPPKKILKREK) is disordered. Positions 116–125 (PPKKILKREK) are enriched in basic residues.

This sequence belongs to the universal ribosomal protein uS11 family. In terms of assembly, part of the 30S ribosomal subunit. Interacts with proteins S7 and S18. Binds to IF-3.

In terms of biological role, located on the platform of the 30S subunit, it bridges several disparate RNA helices of the 16S rRNA. Forms part of the Shine-Dalgarno cleft in the 70S ribosome. This chain is Small ribosomal subunit protein uS11, found in Mycoplasma sp.